The primary structure comprises 250 residues: Corrinoid adenosyltransferase MMAB (250 aa).

Residues 1 to 32 (MAVCGLGSRLGLGSRLGLRGCFGAARLLYPRF) constitute a mitochondrion transit peptide. The disordered stretch occupies residues 34 to 59 (SRGPQGVEDGDRPQPSSKTPRIPKIY). ATP is bound by residues 60 to 63 (TKTG), 68 to 69 (SS), and K78. S134 carries the phosphoserine modification. Position 190 to 194 (190 to 194 (RRAER)) interacts with ATP. K211 is modified (N6-succinyllysine). N214 contacts ATP. An N6-acetyllysine; alternate modification is found at K230. At K230 the chain carries N6-succinyllysine; alternate.

Belongs to the Cob(I)alamin adenosyltransferase family. As to quaternary structure, homotrimer. As to expression, expressed in liver and skeletal muscle.

It is found in the mitochondrion. It catalyses the reaction cob(I)alamin-[corrinoid adenosyltransferase] + ATP = apo-[corrinoid adenosyltransferase] + adenosylcob(III)alamin + triphosphate. Its function is as follows. Converts cob(I)alamin to adenosylcobalamin (adenosylcob(III)alamin), a coenzyme for methylmalonyl-CoA mutase, therefore participates in the final step of the vitamin B12 conversion. Generates adenosylcobalamin (AdoCbl) and directly delivers the cofactor to MUT in a transfer that is stimulated by ATP-binding to MMAB and gated by MMAA. The polypeptide is Corrinoid adenosyltransferase MMAB (Homo sapiens (Human)).